The sequence spans 533 residues: WUSCHEL-related homeobox 7 (533 aa).

Disordered stretches follow at residues 1–74 and 125–212; these read MASS…NPRP and SKNK…STQA. Positions 28 to 41 are enriched in low complexity; the sequence is AGSPPSLLSGSSAG. The segment covering 59–68 has biased composition (basic and acidic residues); the sequence is GEERVPDPKP. The homeobox; WUS-type DNA-binding region spans 65-129; the sequence is DPKPRWNPRP…NRKSRSKNKL (65 aa). Gly residues predominate over residues 132 to 143; the sequence is GGTGRAGLGLGG. The span at 161-174 shows a compositional bias: pro residues; it reads FTPPPPILPAPQPV. Positions 175–202 are enriched in low complexity; sequence QPQQQLVSPVAAPTSSSSSSSDRSSGSS.

It belongs to the WUS homeobox family.

It is found in the nucleus. Its function is as follows. Transcription factor which may be involved in developmental processes. The chain is WUSCHEL-related homeobox 7 (WOX7) from Oryza sativa subsp. japonica (Rice).